A 343-amino-acid chain; its full sequence is Lipopolysaccharide core biosynthesis glycosyltransferase LpsD (343 aa).

This sequence belongs to the glycosyltransferase group 1 family. Glycosyltransferase 4 subfamily.

The protein operates within bacterial outer membrane biogenesis; LPS core biosynthesis. This is Lipopolysaccharide core biosynthesis glycosyltransferase LpsD (lpsD) from Rhizobium meliloti (strain 1021) (Ensifer meliloti).